Reading from the N-terminus, the 1221-residue chain is Deubiquitinating protein VCPIP1 (1221 aa).

The span at 1-19 (MSQPPPPPPLPPPPPPPEA) shows a compositional bias: pro residues. The segment at 1–40 (MSQPPPPPPLPPPPPPPEAPQTSSSLAAAATPGGLSKRRD) is disordered. Residues 207 to 360 (LIPVHVDGDG…RNHYIPLVGI (154 aa)) enclose the OTU domain. Asp-215 is an active-site residue. The active-site Nucleophile is Cys-218. His-353 is a catalytic residue. Residue Lys-407 is modified to N6-acetyllysine. 2 disordered regions span residues 724-778 (SVMQ…KIRI) and 988-1009 (EATTRSRESSPSHGLLKLGSGG). A phosphoserine mark is found at Ser-746 and Ser-756. The span at 754–770 (PSSAPATPTKAPYSPTT) shows a compositional bias: low complexity. Thr-762 carries the phosphothreonine modification. Ser-767, Ser-993, Ser-997, and Ser-1076 each carry phosphoserine. Disordered regions lie at residues 1117–1177 (ASMD…TDSR) and 1189–1221 (RSKAQKENSMEEPEEMDSQDAETTNTTEPMDHS). The segment covering 1143–1156 (VSSSVRPGNLQTGL) has biased composition (polar residues). The span at 1162–1173 (LTGGTENLNTET) shows a compositional bias: low complexity. A phosphoserine mark is found at Ser-1197 and Ser-1206. Acidic residues predominate over residues 1198 to 1208 (MEEPEEMDSQD). Residues 1209 to 1221 (AETTNTTEPMDHS) show a composition bias toward polar residues.

Binds VCP and the ternary complex containing STX5A, NSFL1C and VCP. Post-translationally, phosphorylated at Ser-1206 by ATM or ATR following induction of covalent DNA-protein cross-links (DPCs). In terms of tissue distribution, widely expressed.

It is found in the nucleus. The protein resides in the cytoplasm. Its subcellular location is the endoplasmic reticulum. It localises to the golgi apparatus. The protein localises to the golgi stack. It carries out the reaction Thiol-dependent hydrolysis of ester, thioester, amide, peptide and isopeptide bonds formed by the C-terminal Gly of ubiquitin (a 76-residue protein attached to proteins as an intracellular targeting signal).. In terms of biological role, deubiquitinating enzyme involved in DNA repair and reassembly of the Golgi apparatus and the endoplasmic reticulum following mitosis. Necessary for VCP-mediated reassembly of Golgi stacks after mitosis. Plays a role in VCP-mediated formation of transitional endoplasmic reticulum (tER). Mediates dissociation of the ternary complex containing STX5A, NSFL1C and VCP. Also involved in DNA repair following phosphorylation by ATM or ATR: acts by catalyzing deubiquitination of SPRTN, thereby promoting SPRTN recruitment to chromatin and subsequent proteolytic cleavage of covalent DNA-protein cross-links (DPCs). Hydrolyzes 'Lys-11'- and 'Lys-48'-linked polyubiquitin chains. The polypeptide is Deubiquitinating protein VCPIP1 (Rattus norvegicus (Rat)).